Here is a 155-residue protein sequence, read N- to C-terminus: D-aminoacyl-tRNA deacylase (155 aa).

The short motif at Gly147–Pro148 is the Gly-cisPro motif, important for rejection of L-amino acids element.

This sequence belongs to the DTD family. In terms of assembly, homodimer.

It localises to the cytoplasm. The enzyme catalyses glycyl-tRNA(Ala) + H2O = tRNA(Ala) + glycine + H(+). It carries out the reaction a D-aminoacyl-tRNA + H2O = a tRNA + a D-alpha-amino acid + H(+). An aminoacyl-tRNA editing enzyme that deacylates mischarged D-aminoacyl-tRNAs. Also deacylates mischarged glycyl-tRNA(Ala), protecting cells against glycine mischarging by AlaRS. Acts via tRNA-based rather than protein-based catalysis; rejects L-amino acids rather than detecting D-amino acids in the active site. By recycling D-aminoacyl-tRNA to D-amino acids and free tRNA molecules, this enzyme counteracts the toxicity associated with the formation of D-aminoacyl-tRNA entities in vivo and helps enforce protein L-homochirality. The sequence is that of D-aminoacyl-tRNA deacylase from Corynebacterium urealyticum (strain ATCC 43042 / DSM 7109).